The primary structure comprises 166 residues: Ribosome maturation factor RimM (166 aa).

Positions E94–L166 constitute a PRC barrel domain.

The protein belongs to the RimM family. Binds ribosomal protein uS19.

The protein resides in the cytoplasm. Functionally, an accessory protein needed during the final step in the assembly of 30S ribosomal subunit, possibly for assembly of the head region. Essential for efficient processing of 16S rRNA. May be needed both before and after RbfA during the maturation of 16S rRNA. It has affinity for free ribosomal 30S subunits but not for 70S ribosomes. This chain is Ribosome maturation factor RimM, found in Rickettsia bellii (strain RML369-C).